Here is a 375-residue protein sequence, read N- to C-terminus: 23S rRNA (uracil(747)-C(5))-methyltransferase RlmC (375 aa).

[4Fe-4S] cluster contacts are provided by Cys-3, Cys-11, Cys-14, and Cys-87. Residues Gln-212, Phe-241, Glu-262, and Asn-307 each coordinate S-adenosyl-L-methionine. Cys-334 acts as the Nucleophile in catalysis.

This sequence belongs to the class I-like SAM-binding methyltransferase superfamily. RNA M5U methyltransferase family. RlmC subfamily.

The enzyme catalyses uridine(747) in 23S rRNA + S-adenosyl-L-methionine = 5-methyluridine(747) in 23S rRNA + S-adenosyl-L-homocysteine + H(+). Catalyzes the formation of 5-methyl-uridine at position 747 (m5U747) in 23S rRNA. This chain is 23S rRNA (uracil(747)-C(5))-methyltransferase RlmC, found in Shigella dysenteriae serotype 1 (strain Sd197).